The sequence spans 49 residues: Large ribosomal subunit protein bL33B (49 aa).

It belongs to the bacterial ribosomal protein bL33 family.

This chain is Large ribosomal subunit protein bL33B, found in Latilactobacillus sakei subsp. sakei (strain 23K) (Lactobacillus sakei subsp. sakei).